The sequence spans 361 residues: ATP phosphoribosyltransferase regulatory subunit (361 aa).

Belongs to the class-II aminoacyl-tRNA synthetase family. HisZ subfamily. As to quaternary structure, heteromultimer composed of HisG and HisZ subunits.

Its subcellular location is the cytoplasm. It participates in amino-acid biosynthesis; L-histidine biosynthesis; L-histidine from 5-phospho-alpha-D-ribose 1-diphosphate: step 1/9. Functionally, required for the first step of histidine biosynthesis. May allow the feedback regulation of ATP phosphoribosyltransferase activity by histidine. This is ATP phosphoribosyltransferase regulatory subunit from Thermus thermophilus (strain ATCC 27634 / DSM 579 / HB8).